The sequence spans 522 residues: Type-2 serine--tRNA ligase (522 aa).

Residue A319 participates in L-serine binding. C321 is a Zn(2+) binding site. R350 is an L-serine binding site. ATP is bound by residues 350–352 (RWE) and 361–362 (RV). 367–369 (RIE) contributes to the L-serine binding site. Zn(2+)-binding residues include E369 and C476. An ATP-binding site is contributed by R483.

Belongs to the class-II aminoacyl-tRNA synthetase family. Type-2 seryl-tRNA synthetase subfamily. Homodimer. Requires Zn(2+) as cofactor.

Its subcellular location is the cytoplasm. The catalysed reaction is tRNA(Ser) + L-serine + ATP = L-seryl-tRNA(Ser) + AMP + diphosphate + H(+). The enzyme catalyses tRNA(Sec) + L-serine + ATP = L-seryl-tRNA(Sec) + AMP + diphosphate + H(+). It participates in aminoacyl-tRNA biosynthesis; selenocysteinyl-tRNA(Sec) biosynthesis; L-seryl-tRNA(Sec) from L-serine and tRNA(Sec): step 1/1. Catalyzes the attachment of serine to tRNA(Ser). Is also able to aminoacylate tRNA(Sec) with serine, to form the misacylated tRNA L-seryl-tRNA(Sec), which will be further converted into selenocysteinyl-tRNA(Sec). This chain is Type-2 serine--tRNA ligase (serS), found in Methanococcus aeolicus (strain ATCC BAA-1280 / DSM 17508 / OCM 812 / Nankai-3).